Reading from the N-terminus, the 248-residue chain is Probable cyclic nucleotide phosphodiesterase CBUA0032 (248 aa).

Fe cation contacts are provided by aspartate 13, histidine 15, aspartate 52, asparagine 82, histidine 152, histidine 191, and histidine 193. AMP contacts are provided by residues histidine 15, aspartate 52, and 82–83 (NH). Position 193 (histidine 193) interacts with AMP.

This sequence belongs to the cyclic nucleotide phosphodiesterase class-III family. Fe(2+) serves as cofactor.

This is Probable cyclic nucleotide phosphodiesterase CBUA0032 from Coxiella burnetii (strain RSA 493 / Nine Mile phase I).